Reading from the N-terminus, the 338-residue chain is Porphobilinogen deaminase (338 aa).

At Cys265 the chain carries S-(dipyrrolylmethanemethyl)cysteine.

This sequence belongs to the HMBS family. The cofactor is dipyrromethane.

It carries out the reaction 4 porphobilinogen + H2O = hydroxymethylbilane + 4 NH4(+). It participates in porphyrin-containing compound metabolism; protoporphyrin-IX biosynthesis; coproporphyrinogen-III from 5-aminolevulinate: step 2/4. Functionally, tetrapolymerization of the monopyrrole PBG into the hydroxymethylbilane pre-uroporphyrinogen in several discrete steps. The protein is Porphobilinogen deaminase (HEM3) of Yarrowia lipolytica (strain CLIB 122 / E 150) (Yeast).